The chain runs to 475 residues: Endoglucanase A (475 aa).

Positions 1-26 (MKKTTAFLLCFLMIFTALLPMQNANA) are cleaved as a signal peptide. His147 is a catalytic residue. The Proton donor role is filled by Glu195. Residue Glu332 is the Nucleophile of the active site. The Dockerin domain maps to 409–474 (PVIVYGDYNN…LLGMVSKLPS (66 aa)).

It belongs to the glycosyl hydrolase 5 (cellulase A) family.

It carries out the reaction Endohydrolysis of (1-&gt;4)-beta-D-glucosidic linkages in cellulose, lichenin and cereal beta-D-glucans.. In terms of biological role, the biological conversion of cellulose to glucose generally requires three types of hydrolytic enzymes: (1) Endoglucanases which cut internal beta-1,4-glucosidic bonds; (2) Exocellobiohydrolases that cut the disaccharide cellobiose from the non-reducing end of the cellulose polymer chain; (3) Beta-1,4-glucosidases which hydrolyze the cellobiose and other short cello-oligosaccharides to glucose. The polypeptide is Endoglucanase A (celCCA) (Ruminiclostridium cellulolyticum (strain ATCC 35319 / DSM 5812 / JCM 6584 / H10) (Clostridium cellulolyticum)).